We begin with the raw amino-acid sequence, 299 residues long: Putative activator of 90 kDa heat shock protein ATPase homolog 2 (299 aa).

Belongs to the AHA1 family.

In terms of biological role, co-chaperone that stimulates HSP90 ATPase activity. This chain is Putative activator of 90 kDa heat shock protein ATPase homolog 2, found in Homo sapiens (Human).